Reading from the N-terminus, the 147-residue chain is MDTLTAIGRWLAKQHVVTWCVHHEGELWCANAFYLFDAQNVALYLLTDDKTRHAQMSGACASVAGTVNGQPKTVARIRGVQFKGEIRRLEGQESDAARKAYLRRFPVARGLPAPVWEIRLDEIKFTDNTLGFGKKLHWLRDSRAQQA.

The protein belongs to the UPF0306 family.

The protein is UPF0306 protein YhbP of Salmonella paratyphi A (strain AKU_12601).